Here is a 541-residue protein sequence, read N- to C-terminus: CRISPR-associated exonuclease Cas4/endonuclease Cas1 fusion (541 aa).

A CRISPR-associated exonuclease Cas4 region spans residues 1-179 (MGIHSLLYCE…NCSLAPVCLP (179 aa)). Residue cysteine 9 coordinates [4Fe-4S] cluster. Positions 65 and 78 each coordinate Mn(2+). 3 residues coordinate [4Fe-4S] cluster: cysteine 168, cysteine 171, and cysteine 177. The interval 204–541 (TLHVFGHDSR…ANIFAQARLR (338 aa)) is CRISPR-associated endonuclease Cas1. Mn(2+) contacts are provided by glutamate 365, histidine 433, and glutamate 448.

The protein in the N-terminal section; belongs to the CRISPR-associated exonuclease Cas4 family. In the C-terminal section; belongs to the CRISPR-associated endonuclease Cas1 family. Homodimer, forms a heterotetramer with a Cas2 homodimer. Requires [4Fe-4S] cluster as cofactor. It depends on Mg(2+) as a cofactor. Mn(2+) serves as cofactor.

It catalyses the reaction exonucleolytic cleavage in the 5'- to 3'-direction to yield nucleoside 3'-phosphates.. Its function is as follows. CRISPR (clustered regularly interspaced short palindromic repeat), is an adaptive immune system that provides protection against mobile genetic elements (viruses, transposable elements and conjugative plasmids). CRISPR clusters contain spacers, sequences complementary to antecedent mobile elements, and target invading nucleic acids. CRISPR clusters are transcribed and processed into CRISPR RNA (crRNA). The Cas4 region acts as a ssDNA exonuclease, while the Cas1 region acts as a dsDNA endonuclease. Involved in the integration of spacer DNA into the CRISPR cassette. In Leptospira interrogans serogroup Icterohaemorrhagiae serovar Lai (strain 56601), this protein is CRISPR-associated exonuclease Cas4/endonuclease Cas1 fusion (cas4-cas1).